Here is a 240-residue protein sequence, read N- to C-terminus: MQAARGGAGRPGREGRGLERECERSPGVGAAMPPGPCAWPPRAALRLWLGCVCFALVQADSPSAPVNVTVRHLKANSAVVSWDVLEDEVVIGFAISQQKKDVRMLRFIQEVNTTTRSCALWDLEEDTEYIVHVQAISIQGQSPASEPVLFKTPREAEKMASKNKDEVTMKEMGRNQQLRTGEVLIIVVVLFMWAGVIALFCRQYDIIKDNEPNNNKEKTKSASETSTPEHQGGGLLRSKI.

Residues 1-10 (MQAARGGAGR) are compositionally biased toward gly residues. Residues 1-30 (MQAARGGAGRPGREGRGLERECERSPGVGA) form a disordered region. Positions 11-24 (PGREGRGLERECER) are enriched in basic and acidic residues. The region spanning 64 to 155 (APVNVTVRHL…EPVLFKTPRE (92 aa)) is the Fibronectin type-III domain. Asparagine 67 and asparagine 112 each carry an N-linked (GlcNAc...) asparagine glycan. A helical membrane pass occupies residues 181–201 (GEVLIIVVVLFMWAGVIALFC). A compositionally biased stretch (basic and acidic residues) spans 210-221 (NEPNNNKEKTKS). Residues 210-240 (NEPNNNKEKTKSASETSTPEHQGGGLLRSKI) are disordered. The span at 231–240 (QGGGLLRSKI) shows a compositional bias: gly residues. The Microbody targeting signal signature appears at 238–240 (SKI).

In terms of assembly, dimer; may exist in other oligomeric forms. Post-translationally, N-Glycosylated. In terms of processing, the extracellular domain is cleaved and released from the cell membrane.

It is found in the cell membrane. It localises to the peroxisome membrane. The protein localises to the secreted. Its function is as follows. Mediates beneficial effects of muscular exercise. Induces browning of white adipose tissue by stimulating UCP1 expression, at least in part, via the nuclear receptor PPARA. In Rattus norvegicus (Rat), this protein is Fibronectin type III domain-containing protein 5 (Fndc5).